The chain runs to 394 residues: Elongation factor Tu (394 aa).

A tr-type G domain is found at Lys10–Val204. A G1 region spans residues Gly19–Thr26. Gly19–Thr26 is a binding site for GTP. Thr26 is a binding site for Mg(2+). A G2 region spans residues Gly60–Ser64. A G3 region spans residues Asp81–Gly84. Residues Asp81–His85 and Asn136–Asp139 contribute to the GTP site. The interval Asn136–Asp139 is G4. A G5 region spans residues Ser174–Leu176.

This sequence belongs to the TRAFAC class translation factor GTPase superfamily. Classic translation factor GTPase family. EF-Tu/EF-1A subfamily. In terms of assembly, monomer.

Its subcellular location is the cytoplasm. It catalyses the reaction GTP + H2O = GDP + phosphate + H(+). Its function is as follows. GTP hydrolase that promotes the GTP-dependent binding of aminoacyl-tRNA to the A-site of ribosomes during protein biosynthesis. The polypeptide is Elongation factor Tu (Rickettsia montanensis).